A 330-amino-acid chain; its full sequence is Virulence plasmid integrase pGP8-D (330 aa).

Residues Phe39–Asn124 form the Core-binding (CB) domain. Residues Val152–Met327 form the Tyr recombinase domain. Residues Arg189, Lys214, His279, Arg282, and His305 contribute to the active site. The active-site O-(3'-phospho-DNA)-tyrosine intermediate is the Tyr314.

It belongs to the 'phage' integrase family.

This is Virulence plasmid integrase pGP8-D from Chlamydia trachomatis serovar L2 (strain ATCC VR-902B / DSM 19102 / 434/Bu).